An 85-amino-acid chain; its full sequence is Toxin Cll6 (85 aa).

The first 19 residues, 1–19 (MNSLLMIIGCLVLIGTVWT), serve as a signal peptide directing secretion. Residues 20–83 (KEGYLVNMKT…TWPLPGKSCS (64 aa)) form the LCN-type CS-alpha/beta domain. 4 disulfide bridges follow: Cys31-Cys82, Cys35-Cys58, Cys44-Cys63, and Cys48-Cys65. Serine amide is present on Ser83.

The protein belongs to the long (4 C-C) scorpion toxin superfamily. Sodium channel inhibitor family. Beta subfamily. As to expression, expressed by the venom gland.

It is found in the secreted. Beta toxins bind voltage-independently at site-4 of sodium channels (Nav) and shift the voltage of activation toward more negative potentials thereby affecting sodium channel activation and promoting spontaneous and repetitive firing. The protein is Toxin Cll6 of Centruroides limpidus (Mexican scorpion).